A 420-amino-acid polypeptide reads, in one-letter code: Tyrosine--tRNA ligase (420 aa).

Residue Tyr36 coordinates L-tyrosine. The 'HIGH' region signature appears at 41-50 (PTADSLHIGH). Tyr170 and Gln174 together coordinate L-tyrosine. The 'KMSKS' region motif lies at 231 to 235 (KFGKS). Lys234 serves as a coordination point for ATP. Residues 353–420 (TNIVEVLIET…KKKYFMVNYQ (68 aa)) form the S4 RNA-binding domain.

This sequence belongs to the class-I aminoacyl-tRNA synthetase family. TyrS type 1 subfamily. As to quaternary structure, homodimer.

The protein localises to the cytoplasm. It carries out the reaction tRNA(Tyr) + L-tyrosine + ATP = L-tyrosyl-tRNA(Tyr) + AMP + diphosphate + H(+). Catalyzes the attachment of tyrosine to tRNA(Tyr) in a two-step reaction: tyrosine is first activated by ATP to form Tyr-AMP and then transferred to the acceptor end of tRNA(Tyr). The polypeptide is Tyrosine--tRNA ligase (Staphylococcus aureus (strain bovine RF122 / ET3-1)).